The chain runs to 1314 residues: AT-rich interactive domain-containing protein 4B (1314 aa).

Disordered regions lie at residues 123–169 (LPLT…RKQT) and 266–306 (KTEL…EPFP). A phosphoserine mark is found at serine 276, serine 295, and serine 296. Acidic residues predominate over residues 277 to 305 (EAEEEEEEEDDEKEKEDNSSEEEEEIEPF). The ARID domain occupies 306-398 (PEERENFLQQ…YLYGFEEYCR (93 aa)). Glycyl lysine isopeptide (Lys-Gly) (interchain with G-Cter in SUMO2) cross-links involve residues lysine 428 and lysine 461. Residues 439–464 (NVEDSKNVMPKEETPAEDESERKENI) are compositionally biased toward basic and acidic residues. Disordered regions lie at residues 439 to 577 (NVED…KVQV), 635 to 678 (IKHR…SPEM), 709 to 888 (ASES…EEKR), 943 to 1215 (KELF…RLPK), and 1256 to 1290 (VASIDRRRKRLKKKERESAATSSSSSSPSSSSITA). Serine 482 is modified (phosphoserine). Residues 486 to 511 (KEAHITKLEENENLEDKDGGRARTEE) show a composition bias toward basic and acidic residues. The span at 531 to 567 (NKEEDEDDEEIEEEEEEDEEEDEDEDDDDNNEEEEFE) shows a compositional bias: acidic residues. The Tudor-knot domain occupies 572-624 (GMKVQVRYGRGKNQKMYEASIKDSDVEGGEALYLVHYCGWNVRYDEWIKADKI). The span at 643 to 656 (NKLDKEKDRDEKYS) shows a compositional bias: basic and acidic residues. 4 positions are modified to phosphoserine: serine 666, serine 668, serine 675, and serine 717. Basic and acidic residues-rich tracts occupy residues 722–754 (ERCTQDVDNIGKDESKVEHSTHSRNELISKEEQ) and 778–787 (SPERLRKDME). Lysine 751 is covalently cross-linked (Glycyl lysine isopeptide (Lys-Gly) (interchain with G-Cter in SUMO2)). 2 positions are modified to phosphoserine: serine 778 and serine 790. Residues 788 to 800 (AISEDTDFEEEDE) show a composition bias toward acidic residues. Threonine 793 is subject to Phosphothreonine. 3 stretches are compositionally biased toward basic and acidic residues: residues 808–817 (VKKDTTDKAL), 841–853 (GKKEDRTKSKEPL), and 997–1012 (KPIEEKPLEVSDRKTE). Positions 1013 to 1023 (FPSSGSNSVLN) are enriched in polar residues. A Phosphoserine modification is found at serine 1016. Residue threonine 1028 is modified to Phosphothreonine. The span at 1030 to 1051 (ESPSSVTITEASQQQSSVTVSV) shows a compositional bias: low complexity. The residue at position 1031 (serine 1031) is a Phosphoserine. Residues 1058 to 1067 (EEVRSIKSET) are compositionally biased toward basic and acidic residues. Low complexity predominate over residues 1089-1103 (SSPAGFDASVSSSSS). Residues 1132 to 1150 (KKQKRSHKATVVNNKKKGK) are compositionally biased toward basic residues. Threonine 1152 is modified (phosphothreonine). Serine 1154, serine 1155, serine 1157, and serine 1161 each carry phosphoserine. Residues 1164–1186 (ESVTKTQTIKSVPTGMKTHNSKS) show a composition bias toward polar residues. Positions 1198-1210 (RNGDKDPDLKEPS) are enriched in basic and acidic residues. The stretch at 1227–1272 (ENMTSAERISILQEKLQEIRKHYLSLKSEVASIDRRRKRLKKKERE) forms a coiled coil. The segment covering 1274 to 1290 (AATSSSSSSPSSSSITA) has biased composition (low complexity).

As to quaternary structure, component of a Sin3A corepressor complex consisting of SIN3A, SAP130, SUDS3/SAP45, SAP180, HDAC1 and HDAC2. Interacts with ARID4A. Interacts with AR. In terms of tissue distribution, expressed in Sertoli cells of the testis.

It localises to the nucleus. Its function is as follows. Acts as a transcriptional repressor. May function in the assembly and/or enzymatic activity of the Sin3A corepressor complex or in mediating interactions between the complex and other regulatory complexes. Plays a role in the regulation of epigenetic modifications at the PWS/AS imprinting center near the SNRPN promoter, where it might function as part of a complex with RB1 and ARID4A. Involved in spermatogenesis, together with ARID4A, where it functions as a transcriptional coactivator for AR (androgen receptor) and enhances expression of genes required for sperm maturation. Regulates expression of the tight junction protein CLDN3 in the testis, which is important for integrity of the blood-testis barrier. Plays a role in myeloid homeostasis where it regulates the histone methylation state of bone marrow cells and expression of various genes involved in hematopoiesis. May function as a leukemia suppressor. This chain is AT-rich interactive domain-containing protein 4B (Arid4b), found in Mus musculus (Mouse).